We begin with the raw amino-acid sequence, 496 residues long: MAGTGVFADVLDGEVYKYYADGEWRASASGKTVAIVNPTTRQTQYRVQACTQEEVNKVMDAAKVAQKSWARTPLWKRAELLHKAAAILKEHKTPIAESLVKEIAKPAKDAVSEVVRSGDLVSYTAEEGVRILGEGKLLVSDSFPGNERNKYCLSSKVPLGVVLAIPPFNYPVNLAVSKIGPALIAGNSLVLKPPTQGAVAALHMVHCFHLAGFPKGLISCVTGKGSEIGDFLTMHPGVNCISFTGGDTGIAISKKAGMVPLQMELGGKDACIVLEDADLDLVAANIVKGGFSYSGQRCTAVKVVLIMEAVADTVVEKVNAKLAKLKVGPPEDDSDITPVVTESSANFIEGLVMDAKEKGATFCQEYRREGNLIWPLLLDHVRPDMRIAWEEPFGPVLPVIRINSVEEGIHHCNASNFGLQGCVFTRDINKAIMISDAMESGTVQINSAPARGPDHFPFQGLKDSGIGSQGITNSINMMTKVKSTVINLPSPSYTMG.

Substrate is bound by residues Arg-116 and 169–170 (NY). Positions 192, 195, and 230 each coordinate NADP(+). 245-249 (GGDTG) serves as a coordination point for NAD(+). Glu-264 functions as the Proton acceptor in the catalytic mechanism. 297–299 (RCT) contacts substrate. The Nucleophile role is filled by Cys-298. Glu-391 provides a ligand contact to NADP(+). Ser-404 is subject to Phosphoserine. Arg-451 is a substrate binding site.

Belongs to the aldehyde dehydrogenase family. Interacts with 14-3-3 protein when phosphorylated. This interaction is released by divalent cations. In terms of processing, phosphorylated in shoots and non-photosynthetic tissues, but not in leaves.

It is found in the cytoplasm. The enzyme catalyses D-glyceraldehyde 3-phosphate + NADP(+) + H2O = (2R)-3-phosphoglycerate + NADPH + 2 H(+). Its activity is regulated as follows. Insensitive to magnesium or calcium when dephosphorylated. When phosphorylated, 3-fold activation by magnesium or calcium, 2-fold activation by potassium, inhibited by ADP and AMP and insensitive to ATP or PPi. Functionally, important as a means of generating NADPH for biosynthetic reactions. The protein is NADP-dependent glyceraldehyde-3-phosphate dehydrogenase (GAPN) of Triticum aestivum (Wheat).